The sequence spans 108 residues: uncharacterized protein (108 aa).

The HTH hxlR-type domain maps to 7 to 106; sequence CPRFEKAVDI…WATEWIDPSF (100 aa).

This is an uncharacterized protein from Bacillus subtilis (strain 168).